Here is a 278-residue protein sequence, read N- to C-terminus: Sulfur carrier protein FdhD (278 aa).

The Cysteine persulfide intermediate role is filled by Cys-121. Residue 260–265 (FCKPGR) coordinates Mo-bis(molybdopterin guanine dinucleotide).

Belongs to the FdhD family.

It is found in the cytoplasm. Its function is as follows. Required for formate dehydrogenase (FDH) activity. Acts as a sulfur carrier protein that transfers sulfur from IscS to the molybdenum cofactor prior to its insertion into FDH. This chain is Sulfur carrier protein FdhD, found in Salmonella agona (strain SL483).